The following is a 150-amino-acid chain: Arginine repressor (150 aa).

This sequence belongs to the ArgR family.

The protein localises to the cytoplasm. The protein operates within amino-acid biosynthesis; L-arginine biosynthesis [regulation]. In terms of biological role, regulates arginine biosynthesis genes. The sequence is that of Arginine repressor from Desulfitobacterium hafniense (strain DSM 10664 / DCB-2).